Reading from the N-terminus, the 399-residue chain is Subtilisin-like protease 4 (399 aa).

An N-terminal signal peptide occupies residues 1 to 19; it reads MVCLKTLSVFLAAFAAADA. A propeptide spanning residues 20 to 118 is cleaved from the precursor; sequence RAVFKTQGHK…VEQDQVVRIS (99 aa). One can recognise an Inhibitor I9 domain in the interval 38–117; it reads YIVVMKDGVS…YVEQDQVVRI (80 aa). Residues 128 to 399 enclose the Peptidase S8 domain; that stretch reads SWGLGRVSHR…NRLLYNGSGQ (272 aa). Catalysis depends on charge relay system residues aspartate 160 and histidine 191. Residues asparagine 252 and asparagine 308 are each glycosylated (N-linked (GlcNAc...) asparagine). The Charge relay system role is filled by serine 346. N-linked (GlcNAc...) asparagine glycosylation is present at asparagine 395.

The protein belongs to the peptidase S8 family.

It localises to the secreted. In terms of biological role, secreted subtilisin-like serine protease with keratinolytic activity that contributes to pathogenicity. The protein is Subtilisin-like protease 4 (SUB4) of Arthroderma benhamiae (strain ATCC MYA-4681 / CBS 112371) (Trichophyton mentagrophytes).